A 389-amino-acid chain; its full sequence is Tryptophan synthase beta chain (389 aa).

Position 84 is an N6-(pyridoxal phosphate)lysine (lysine 84).

It belongs to the TrpB family. Tetramer of two alpha and two beta chains. It depends on pyridoxal 5'-phosphate as a cofactor.

The catalysed reaction is (1S,2R)-1-C-(indol-3-yl)glycerol 3-phosphate + L-serine = D-glyceraldehyde 3-phosphate + L-tryptophan + H2O. The protein operates within amino-acid biosynthesis; L-tryptophan biosynthesis; L-tryptophan from chorismate: step 5/5. Its function is as follows. The beta subunit is responsible for the synthesis of L-tryptophan from indole and L-serine. The sequence is that of Tryptophan synthase beta chain from Methanococcus aeolicus (strain ATCC BAA-1280 / DSM 17508 / OCM 812 / Nankai-3).